The chain runs to 338 residues: Beta-ketoacyl-[acyl-carrier-protein] synthase III (338 aa).

Residues Cys-119 and His-261 contribute to the active site. The interval Gln-262–Arg-266 is ACP-binding. Asn-291 is an active-site residue.

This sequence belongs to the thiolase-like superfamily. FabH family. As to quaternary structure, homodimer.

Its subcellular location is the cytoplasm. The enzyme catalyses malonyl-[ACP] + acetyl-CoA + H(+) = 3-oxobutanoyl-[ACP] + CO2 + CoA. Its pathway is lipid metabolism; fatty acid biosynthesis. Its function is as follows. Catalyzes the condensation reaction of fatty acid synthesis by the addition to an acyl acceptor of two carbons from malonyl-ACP. Catalyzes the first condensation reaction which initiates fatty acid synthesis and may therefore play a role in governing the total rate of fatty acid production. Possesses both acetoacetyl-ACP synthase and acetyl transacylase activities. Its substrate specificity determines the biosynthesis of branched-chain and/or straight-chain of fatty acids. The chain is Beta-ketoacyl-[acyl-carrier-protein] synthase III from Prochlorococcus marinus (strain NATL2A).